A 468-amino-acid polypeptide reads, in one-letter code: Immunoglobulin superfamily member 21 (468 aa).

A signal peptide spans 1 to 24 (MQAAPSLRRASCLLLAAILDLARG). Residues 25 to 132 (YLTVNIEPLP…RATREKVVLA (108 aa)) form the Ig-like 1 domain. A disulfide bridge connects residues Cys46 and Cys116. 3 N-linked (GlcNAc...) asparagine glycosylation sites follow: Asn82, Asn165, and Asn407. The Ig-like 2 domain maps to 344-429 (PKIMMTPSRA…GSTDTHTRLI (86 aa)).

As to quaternary structure, interacts (Ig-like 1 domain) with NRXN2 (via Laminin G-like 1 domain) in a trans-interaction manner. As to expression, expressed in brain (at protein levels). Highly expressed in the pyramidal cell layer of the dorsal and ventral hippocampal CA1 and CA3 regions, layers 5 and 6 of the cortex, the thalamus and the pons and weakly expressed in the cerebellum. Expressed in neurons but not in glia.

The protein resides in the postsynaptic cell membrane. Involved in synaptic inhibition in the brain. Selectively regulates inhibitory presynaptic differentiation through interacting with presynaptic NRXN2. This is Immunoglobulin superfamily member 21 (Igsf21) from Mus musculus (Mouse).